The chain runs to 589 residues: Peptide transporter PTR_A (589 aa).

The segment at 1-56 is disordered; sequence MSETKPAANDLSNVPSASDSDKDNSLDKVHSLEKTGVHEDINKLPSSDLEQLEDDG. Residues 19-42 show a composition bias toward basic and acidic residues; that stretch reads DSDKDNSLDKVHSLEKTGVHEDIN. The next 4 membrane-spanning stretches (helical) occupy residues 74 to 95, 124 to 144, 153 to 173, and 180 to 200; these read IPLS…YYGL, ALSY…AWIA, AICI…ITSI, and NTSL…TGGV. The N-linked (GlcNAc...) asparagine glycan is linked to Asn233. A run of 8 helical transmembrane segments spans residues 236–256, 266–286, 345–365, 388–408, 420–440, 467–487, 502–522, and 533–553; these read IQNV…SVIA, FWAG…VLLL, VYAC…GQMI, INAI…YPFI, IFWG…LQHF, IAIQ…ASIT, SFIM…GIAL, and WTYT…YIIF.

Belongs to the major facilitator superfamily. Proton-dependent oligopeptide transporter (POT/PTR) (TC 2.A.17) family.

The protein resides in the cell membrane. The enzyme catalyses a dipeptide(out) + H(+)(out) = a dipeptide(in) + H(+)(in). The catalysed reaction is an L-amino acid tripeptide(out) + H(+)(out) = an L-amino acid tripeptide(in) + H(+)(in). In terms of biological role, peptide transporter that exploits the inwardly directed proton motive force to facilitate the cellular uptake of di/tripeptides. The chain is Peptide transporter PTR_A from Candidozyma auris (Yeast).